The following is a 113-amino-acid chain: Large ribosomal subunit protein bL19 (113 aa).

This sequence belongs to the bacterial ribosomal protein bL19 family.

Functionally, this protein is located at the 30S-50S ribosomal subunit interface and may play a role in the structure and function of the aminoacyl-tRNA binding site. The protein is Large ribosomal subunit protein bL19 of Rhodococcus erythropolis (strain PR4 / NBRC 100887).